The sequence spans 274 residues: Large ribosomal subunit protein uL2 (274 aa).

Disordered regions lie at residues 40–59 (SGGR…GGHK) and 223–274 (VAMN…RRSR). 2 stretches are compositionally biased toward basic residues: residues 49-59 (VTRRHQGGGHK) and 256-274 (YRTR…RRSR).

The protein belongs to the universal ribosomal protein uL2 family. In terms of assembly, part of the 50S ribosomal subunit. Forms a bridge to the 30S subunit in the 70S ribosome.

Its function is as follows. One of the primary rRNA binding proteins. Required for association of the 30S and 50S subunits to form the 70S ribosome, for tRNA binding and peptide bond formation. It has been suggested to have peptidyltransferase activity; this is somewhat controversial. Makes several contacts with the 16S rRNA in the 70S ribosome. In Acidithiobacillus ferrooxidans (strain ATCC 23270 / DSM 14882 / CIP 104768 / NCIMB 8455) (Ferrobacillus ferrooxidans (strain ATCC 23270)), this protein is Large ribosomal subunit protein uL2.